A 211-amino-acid chain; its full sequence is Probable nicotinate-nucleotide adenylyltransferase (211 aa).

The protein belongs to the NadD family.

It catalyses the reaction nicotinate beta-D-ribonucleotide + ATP + H(+) = deamido-NAD(+) + diphosphate. It participates in cofactor biosynthesis; NAD(+) biosynthesis; deamido-NAD(+) from nicotinate D-ribonucleotide: step 1/1. Catalyzes the reversible adenylation of nicotinate mononucleotide (NaMN) to nicotinic acid adenine dinucleotide (NaAD). The sequence is that of Probable nicotinate-nucleotide adenylyltransferase from Thermoanaerobacter sp. (strain X514).